The following is a 203-amino-acid chain: UPF0637 protein SH1846 (203 aa).

This sequence belongs to the UPF0637 family.

The polypeptide is UPF0637 protein SH1846 (Staphylococcus haemolyticus (strain JCSC1435)).